The primary structure comprises 200 residues: MNFINETNEEKKNKTNDDDALMQKFLNTRQIILAGEINKELSEKIVRQLLLMESLSATKPIYIYIDSPGGDADAGFAIFDMIRFIKAPVYTIGMGLVASAASIILLAASKERRFGMPNSHYLIHQPLSGIKGVATEIEIHAKELEKMRVKINKLIAEETGTDEKKVAKDTDRDCWLNAKESVEYGLISKIAKNRKDIPEK.

The active-site Nucleophile is the serine 99. Histidine 124 is an active-site residue.

It belongs to the peptidase S14 family. As to quaternary structure, fourteen ClpP subunits assemble into 2 heptameric rings which stack back to back to give a disk-like structure with a central cavity, resembling the structure of eukaryotic proteasomes.

Its subcellular location is the cytoplasm. The enzyme catalyses Hydrolysis of proteins to small peptides in the presence of ATP and magnesium. alpha-casein is the usual test substrate. In the absence of ATP, only oligopeptides shorter than five residues are hydrolyzed (such as succinyl-Leu-Tyr-|-NHMec, and Leu-Tyr-Leu-|-Tyr-Trp, in which cleavage of the -Tyr-|-Leu- and -Tyr-|-Trp bonds also occurs).. Cleaves peptides in various proteins in a process that requires ATP hydrolysis. Has a chymotrypsin-like activity. Plays a major role in the degradation of misfolded proteins. The sequence is that of ATP-dependent Clp protease proteolytic subunit 2 from Treponema denticola (strain ATCC 35405 / DSM 14222 / CIP 103919 / JCM 8153 / KCTC 15104).